Consider the following 157-residue polypeptide: Epithelial membrane protein 1 (157 aa).

A helical membrane pass occupies residues 1–21 (MLVLLAGIFVVHIATVIMLFV). N-linked (GlcNAc...) asparagine glycans are attached at residues N43 and N46. 3 helical membrane-spanning segments follow: residues 67 to 87 (FMIL…FQLF), 95 to 115 (FFLS…GVSI), and 134 to 154 (YILG…YLVL).

Belongs to the PMP-22/EMP/MP20 family.

It localises to the membrane. The chain is Epithelial membrane protein 1 (EMP1) from Homo sapiens (Human).